The primary structure comprises 109 residues: MAERKQGGQNNGAGSSVITEVKPKTQKPSLYRVLILNDDYTPMEFVVYVLERFFNKSREDATRIMLHVHQHGVGVCGVFTYEVAETKVAQVIDSARRHQHPLQCTMEKD.

The disordered stretch occupies residues Met1 to Val21.

Belongs to the ClpS family. As to quaternary structure, binds to the N-terminal domain of the chaperone ClpA.

Functionally, involved in the modulation of the specificity of the ClpAP-mediated ATP-dependent protein degradation. The protein is ATP-dependent Clp protease adapter protein ClpS of Caulobacter sp. (strain K31).